The chain runs to 348 residues: Sesquiterpene synthase MGU_11447 (348 aa).

The Mg(2+) site is built by aspartate 91 and aspartate 96. The DDXXXD motif signature appears at 91-96 (DDLFVD). Arginine 184 contacts substrate. Residues asparagine 230, serine 234, and glutamate 238 each contribute to the Mg(2+) site.

It belongs to the terpene synthase family. Mg(2+) is required as a cofactor.

It catalyses the reaction (2E,6E)-farnesyl diphosphate + H2O = (+)-corvol ether B + diphosphate. The catalysed reaction is (2E,6E)-farnesyl diphosphate + H2O = (+)-corvol ether A + diphosphate. In terms of biological role, terpene synthase that catalyzes the conversion of (2E,6E)-farnesyl diphosphate (FPP) into sesquiterpenes which are important for fungi-environment interactions. Produces a mixture consisting of 8 sesquiterpenes including corvol ethers A and B, as well as traces of epizonarene, gamma-cadinene, delta-cadinene, alpha-cadinene, alpha-cadinol, and an unidentified sesquiterpene. Produces both corvol ether A and corvol ether B in similar concentrations. This is Sesquiterpene synthase MGU_11447 from Metarhizium guizhouense (strain ARSEF 977).